A 212-amino-acid polypeptide reads, in one-letter code: Thymidylate kinase (212 aa).

Residue 10–17 (GLEGAGKT) coordinates ATP.

The protein belongs to the thymidylate kinase family.

The catalysed reaction is dTMP + ATP = dTDP + ADP. Its function is as follows. Phosphorylation of dTMP to form dTDP in both de novo and salvage pathways of dTTP synthesis. This chain is Thymidylate kinase, found in Yersinia pseudotuberculosis serotype O:1b (strain IP 31758).